The primary structure comprises 689 residues: Transcription termination factor Rho (689 aa).

A compositionally biased stretch (polar residues) spans 1–20; the sequence is MPRTPKNQNLEQNTQTQSLT. Disordered regions lie at residues 1 to 90 and 151 to 213; these read MPRT…KQPV and AQAQ…NRNN. The span at 52-65 shows a compositional bias: basic residues; it reads PKRRGRKPNPKTKA. 2 stretches are compositionally biased toward low complexity: residues 170-183 and 191-213; these read NAQQ…QNGE and NNQN…NRNN. Positions 287 to 362 constitute a Rho RNA-BD domain; the sequence is IIYTEGVLEV…RRIDRVNFEE (76 aa). ATP-binding positions include 405-410, 417-422, and Arg-448; these read GKGQRS and RTGKTV.

It belongs to the Rho family. Homohexamer. The homohexamer assembles into an open ring structure.

Functionally, facilitates transcription termination by a mechanism that involves Rho binding to the nascent RNA, activation of Rho's RNA-dependent ATPase activity, and release of the mRNA from the DNA template. The chain is Transcription termination factor Rho from Fibrobacter succinogenes (strain ATCC 19169 / S85).